A 503-amino-acid polypeptide reads, in one-letter code: Angiopoietin-4 (503 aa).

The N-terminal stretch at 1–24 is a signal peptide; that stretch reads MLSQLAMLQGSLLLVVATMSVAQQ. Positions 84 to 238 form a coiled coil; it reads TQQVKQLEQA…RQSAALTNIE (155 aa). N-linked (GlcNAc...) asparagine glycans are attached at residues asparagine 96, asparagine 126, asparagine 140, asparagine 158, asparagine 247, asparagine 274, asparagine 311, asparagine 337, and asparagine 427. The 221-residue stretch at 282-502 folds into the Fibrinogen C-terminal domain; the sequence is MAGEQVFQDC…ASRMMIRPLD (221 aa). Cysteines 291 and 320 form a disulfide. A disulfide bond links cysteine 444 and cysteine 457.

In terms of assembly, homodimer; disulfide-linked. Interacts with TEK/TIE2. As to expression, highly expressed in the lung with much lower levels found in other tissues.

Its subcellular location is the secreted. Binds to TEK/TIE2, modulating ANGPT1 signaling. Can induce tyrosine phosphorylation of TEK/TIE2. Promotes endothelial cell survival, migration and angiogenesis. The chain is Angiopoietin-4 (ANGPT4) from Homo sapiens (Human).